Here is a 142-residue protein sequence, read N- to C-terminus: Nucleoside diphosphate kinase (142 aa).

ATP-binding residues include Lys-11, Phe-59, Arg-87, Thr-93, Arg-104, and Asn-114. The active-site Pros-phosphohistidine intermediate is His-117.

This sequence belongs to the NDK family. Homotetramer. Mg(2+) serves as cofactor.

It is found in the cytoplasm. It carries out the reaction a 2'-deoxyribonucleoside 5'-diphosphate + ATP = a 2'-deoxyribonucleoside 5'-triphosphate + ADP. It catalyses the reaction a ribonucleoside 5'-diphosphate + ATP = a ribonucleoside 5'-triphosphate + ADP. In terms of biological role, major role in the synthesis of nucleoside triphosphates other than ATP. The ATP gamma phosphate is transferred to the NDP beta phosphate via a ping-pong mechanism, using a phosphorylated active-site intermediate. This Yersinia pseudotuberculosis serotype I (strain IP32953) protein is Nucleoside diphosphate kinase.